A 258-amino-acid polypeptide reads, in one-letter code: Type III pantothenate kinase (258 aa).

6–13 (DVGNTNIV) provides a ligand contact to ATP. Substrate contacts are provided by residues tyrosine 100 and 107-110 (GADR). The active-site Proton acceptor is aspartate 109. Aspartate 129 is a binding site for K(+). Residue threonine 132 coordinates ATP. A substrate-binding site is contributed by threonine 184.

It belongs to the type III pantothenate kinase family. As to quaternary structure, homodimer. NH4(+) is required as a cofactor. Requires K(+) as cofactor.

It localises to the cytoplasm. It catalyses the reaction (R)-pantothenate + ATP = (R)-4'-phosphopantothenate + ADP + H(+). Its pathway is cofactor biosynthesis; coenzyme A biosynthesis; CoA from (R)-pantothenate: step 1/5. In terms of biological role, catalyzes the phosphorylation of pantothenate (Pan), the first step in CoA biosynthesis. The polypeptide is Type III pantothenate kinase (Clostridium botulinum (strain Loch Maree / Type A3)).